Consider the following 183-residue polypeptide: Large ribosomal subunit protein uL6 (183 aa).

Belongs to the universal ribosomal protein uL6 family. As to quaternary structure, part of the 50S ribosomal subunit.

Its function is as follows. This protein binds to the 23S rRNA, and is important in its secondary structure. It is located near the subunit interface in the base of the L7/L12 stalk, and near the tRNA binding site of the peptidyltransferase center. In Ruminiclostridium cellulolyticum (strain ATCC 35319 / DSM 5812 / JCM 6584 / H10) (Clostridium cellulolyticum), this protein is Large ribosomal subunit protein uL6.